A 144-amino-acid chain; its full sequence is uncharacterized protein (144 aa).

This is an uncharacterized protein from Escherichia coli O157:H7.